The sequence spans 167 residues: NAD(P)H-quinone oxidoreductase subunit I, chloroplastic (167 aa).

2 4Fe-4S ferredoxin-type domains span residues 55–84 (GRIHFEFDKCIACEVCVRVCPIDLPVVDWK) and 95–124 (LNYSIDFGICIFCGNCVEYCPTNCLSMTEE). [4Fe-4S] cluster is bound by residues cysteine 64, cysteine 67, cysteine 70, cysteine 74, cysteine 104, cysteine 107, cysteine 110, and cysteine 114.

Belongs to the complex I 23 kDa subunit family. In terms of assembly, NDH is composed of at least 16 different subunits, 5 of which are encoded in the nucleus. [4Fe-4S] cluster is required as a cofactor.

The protein resides in the plastid. It localises to the chloroplast thylakoid membrane. The enzyme catalyses a plastoquinone + NADH + (n+1) H(+)(in) = a plastoquinol + NAD(+) + n H(+)(out). The catalysed reaction is a plastoquinone + NADPH + (n+1) H(+)(in) = a plastoquinol + NADP(+) + n H(+)(out). NDH shuttles electrons from NAD(P)H:plastoquinone, via FMN and iron-sulfur (Fe-S) centers, to quinones in the photosynthetic chain and possibly in a chloroplast respiratory chain. The immediate electron acceptor for the enzyme in this species is believed to be plastoquinone. Couples the redox reaction to proton translocation, and thus conserves the redox energy in a proton gradient. The polypeptide is NAD(P)H-quinone oxidoreductase subunit I, chloroplastic (Solanum tuberosum (Potato)).